We begin with the raw amino-acid sequence, 417 residues long: Probable histone-binding protein lin-53 (417 aa).

WD repeat units lie at residues 118 to 158 (NHEG…AVPR), 170 to 210 (GHTK…NVAG), 220 to 260 (GHES…PGHC), 263 to 303 (AHSA…MKLH), 307 to 347 (SHRD…EDQS), and 364 to 404 (GHTA…YNEV).

This sequence belongs to the WD repeat RBAP46/RBAP48/MSI1 family. Binds directly to helix 1 of the histone fold of histone H4, a region that is not accessible when H4 is in chromatin. Probable component of a NuRD-like complex, composed of at least lin-53 and hda-1. Interacts with lin-35. Interacts with hda-1; the interaction is direct. Component of the DRM complex, at least composed of lin-9, lin-35, lin-37, lin-52, lin-53, lin-54- dpl-1 and efl-1. Interacts with hcp-3.

Its subcellular location is the nucleus. It localises to the chromosome. The protein resides in the centromere. Core histone-binding subunit that may target chromatin assembly factors, chromatin remodeling factors and histone deacetylases to their histone substrates in a manner that is regulated by nucleosomal DNA. Required for hcp-3 and his-1 stabilization, localization of hcp-3 to centromeres and for proper chromosome segregation. Synthetic multivulva class B (synMuvB) protein. SynMuvB proteins are required to repress the induction of vulval development by Ras signaling and probably act by forming the multiprotein DRM complex that represses transcription. The protein is Probable histone-binding protein lin-53 of Caenorhabditis elegans.